A 382-amino-acid polypeptide reads, in one-letter code: Small ribosomal subunit protein mS35 (382 aa).

Residues 363–375 are compositionally biased toward gly residues; that stretch reads GRGGKALPGGKGG. Residues 363-382 are disordered; the sequence is GRGGKALPGGKGGKMQRSKR.

It belongs to the mitochondrion-specific ribosomal protein mS35 family. Component of the mitochondrial small ribosomal subunit (mt-SSU). Mature N.crassa 74S mitochondrial ribosomes consist of a small (37S) and a large (54S) subunit. The 37S small subunit contains a 16S ribosomal RNA (16S mt-rRNA) and 32 different proteins. The 54S large subunit contains a 23S rRNA (23S mt-rRNA) and 42 different proteins.

The protein localises to the mitochondrion. In terms of biological role, component of the mitochondrial ribosome (mitoribosome), a dedicated translation machinery responsible for the synthesis of mitochondrial genome-encoded proteins, including at least some of the essential transmembrane subunits of the mitochondrial respiratory chain. The mitoribosomes are attached to the mitochondrial inner membrane and translation products are cotranslationally integrated into the membrane. In Neurospora crassa (strain ATCC 24698 / 74-OR23-1A / CBS 708.71 / DSM 1257 / FGSC 987), this protein is Small ribosomal subunit protein mS35 (rsm24).